A 164-amino-acid polypeptide reads, in one-letter code: Protein CURVATURE THYLAKOID 1A, chloroplastic (164 aa).

The transit peptide at 1–62 (MAISVAASSS…LQKVELLKTR (62 aa)) directs the protein to the chloroplast. Position 63 is an N-acetylalanine (Ala-63). The Stromal segment spans residues 63–93 (ASSEETSSIDTNELITDLKEKWDGLENKSTV). Residues 94–114 (LIYGGGAIVAVWLSSIVVGAI) traverse the membrane as a helical segment. The Lumenal portion of the chain corresponds to 115–116 (NS). Residues 117–137 (VPLLPKVMELVGLGYTGWFVY) traverse the membrane as a helical segment. The Stromal segment spans residues 138 to 164 (RYLLFKSSRKELAEDIESLKKKIAGSE). Residues 140–164 (LLFKSSRKELAEDIESLKKKIAGSE) are a coiled coil.

It belongs to the CURT family. As to quaternary structure, homo- and heterodimers and trimers.

It localises to the plastid. It is found in the chloroplast. The protein localises to the plastoglobule. Its subcellular location is the membrane. The protein resides in the chloroplast thylakoid membrane. In terms of biological role, determines thylakoid architecture by inducing membrane curvature. In Arabidopsis thaliana (Mouse-ear cress), this protein is Protein CURVATURE THYLAKOID 1A, chloroplastic (CURT1A).